The primary structure comprises 548 residues: Glucose-6-phosphate isomerase (548 aa).

The Proton donor role is filled by glutamate 359. Residues histidine 390 and lysine 510 contribute to the active site.

This sequence belongs to the GPI family.

It localises to the cytoplasm. The catalysed reaction is alpha-D-glucose 6-phosphate = beta-D-fructose 6-phosphate. Its pathway is carbohydrate biosynthesis; gluconeogenesis. It functions in the pathway carbohydrate degradation; glycolysis; D-glyceraldehyde 3-phosphate and glycerone phosphate from D-glucose: step 2/4. Functionally, catalyzes the reversible isomerization of glucose-6-phosphate to fructose-6-phosphate. The sequence is that of Glucose-6-phosphate isomerase from Gloeobacter violaceus (strain ATCC 29082 / PCC 7421).